Consider the following 418-residue polypeptide: Trans-acting enoyl reductase (418 aa).

The protein belongs to the saccharopine dehydrogenase family. Enoyl reductase subfamily.

Involved in the reduction of the double bond between C-4 and C-5 during phthiocerol dimycocerosates (DIM A) and glycosylated phenolphthiocerol dimycocerosates (PGL) biosynthesis. In Mycobacterium ulcerans (strain Agy99), this protein is Trans-acting enoyl reductase.